Consider the following 155-residue polypeptide: Small ribosomal subunit protein uS7cz/uS7cy (155 aa).

This sequence belongs to the universal ribosomal protein uS7 family. In terms of assembly, part of the 30S ribosomal subunit.

Its subcellular location is the plastid. It localises to the chloroplast. In terms of biological role, one of the primary rRNA binding proteins, it binds directly to 16S rRNA where it nucleates assembly of the head domain of the 30S subunit. This is Small ribosomal subunit protein uS7cz/uS7cy (rps7-A) from Lotus japonicus (Lotus corniculatus var. japonicus).